The primary structure comprises 277 residues: Translation initiation factor 2 subunit alpha (277 aa).

Residues 22–93 (GEIVVGTVQE…KRGQVDVSLK (72 aa)) enclose the S1 motif domain.

It belongs to the eIF-2-alpha family. In terms of assembly, heterotrimer composed of an alpha, a beta and a gamma chain.

Functionally, eIF-2 functions in the early steps of protein synthesis by forming a ternary complex with GTP and initiator tRNA. In Aeropyrum pernix (strain ATCC 700893 / DSM 11879 / JCM 9820 / NBRC 100138 / K1), this protein is Translation initiation factor 2 subunit alpha (eif2a).